The primary structure comprises 241 residues: Enterotoxin type H (241 aa).

An N-terminal signal peptide occupies residues 1–24 (MINKIKILFSFLALLLSFTSYAKA). C106 and C116 are disulfide-bonded. Residues D191, H230, and D232 each coordinate Zn(2+).

This sequence belongs to the staphylococcal/streptococcal toxin family. Interacts with host MHC class II molecules composed of alpha/HLA-DRA and beta/HLA-DRB1 chains. Interacts with host TCR alpha-chain TRAV27. Requires Zn(2+) as cofactor.

The protein resides in the secreted. In terms of biological role, staphylococcal enterotoxin that activates the host immune system by binding as unprocessed molecules to major histocompatibility (MHC) complex class II and T-cell receptor (TCR) molecules via their alpha domain, in particular TRAV27. In turn, this ternary complex activates a large number of T-lymphocytes initiating a systemic release of pro-inflammatory cytokines. Also causes the intoxication staphylococcal food poisoning syndrome. The illness characterized by high fever, hypotension, diarrhea, shock, and in some cases death. The sequence is that of Enterotoxin type H (entH) from Staphylococcus aureus.